The following is a 60-amino-acid chain: Short neurotoxin 1 (60 aa).

Intrachain disulfides connect cysteine 3-cysteine 22, cysteine 17-cysteine 39, cysteine 41-cysteine 52, and cysteine 53-cysteine 58.

Belongs to the three-finger toxin family. Short-chain subfamily. Type I alpha-neurotoxin sub-subfamily. Expressed by the venom gland.

It localises to the secreted. Functionally, binds to muscle nicotinic acetylcholine receptor (nAChR) and inhibit acetylcholine from binding to the receptor, thereby impairing neuromuscular transmission. In Hydrophis schistosus (Beaked sea snake), this protein is Short neurotoxin 1.